Consider the following 238-residue polypeptide: N-terminal acetyltransferase A complex catalytic subunit ARD1 (238 aa).

Residues 35-195 (YHILSWPEAS…DAYAMKKVLK (161 aa)) enclose the N-acetyltransferase domain.

Belongs to the acetyltransferase family. ARD1 subfamily. As to quaternary structure, component of the N-terminal acetyltransferase A (NatA) complex, which is composed of ARD1, NAT1 and NAT5. Can self-associate.

It is found in the cytoplasm. It carries out the reaction N-terminal glycyl-[protein] + acetyl-CoA = N-terminal N(alpha)-acetylglycyl-[protein] + CoA + H(+). It catalyses the reaction N-terminal L-alanyl-[protein] + acetyl-CoA = N-terminal N(alpha)-acetyl-L-alanyl-[protein] + CoA + H(+). The enzyme catalyses N-terminal L-seryl-[protein] + acetyl-CoA = N-terminal N(alpha)-acetyl-L-seryl-[protein] + CoA + H(+). The catalysed reaction is N-terminal L-valyl-[protein] + acetyl-CoA = N-terminal N(alpha)-acetyl-L-valyl-[protein] + CoA + H(+). It carries out the reaction N-terminal L-cysteinyl-[protein] + acetyl-CoA = N-terminal N(alpha)-acetyl-L-cysteinyl-[protein] + CoA + H(+). It catalyses the reaction N-terminal L-threonyl-[protein] + acetyl-CoA = N-terminal N(alpha)-acetyl-L-threonyl-[protein] + CoA + H(+). Functionally, catalytic component of the NatA N-terminal acetyltransferase, which catalyzes acetylation of proteins beginning with Met-Ser, Met-Gly and Met-Ala. N-acetylation plays a role in normal eukaryotic translation and processing, protect against proteolytic degradation and protein turnover. In Saccharomyces cerevisiae (strain ATCC 204508 / S288c) (Baker's yeast), this protein is N-terminal acetyltransferase A complex catalytic subunit ARD1 (ARD1).